A 194-amino-acid chain; its full sequence is Fibroblast growth factor 7 (194 aa).

Residues 1–31 (MHKWILTWILPTLLYRSCFHIICLVGTISLA) form the signal peptide. An N-linked (GlcNAc...) asparagine glycan is attached at asparagine 45.

This sequence belongs to the heparin-binding growth factors family. Interacts with FGFBP1. Interacts with FGFR2. Affinity between fibroblast growth factors (FGFs) and their receptors is increased by heparan sulfate glycosaminoglycans that function as coreceptors. Epithelial cell.

It localises to the secreted. Functionally, plays an important role in the regulation of embryonic development, cell proliferation and cell differentiation. Required for normal branching morphogenesis. Growth factor active on keratinocytes. Possible major paracrine effector of normal epithelial cell proliferation. This chain is Fibroblast growth factor 7 (FGF7), found in Homo sapiens (Human).